The primary structure comprises 343 residues: MLTNPSQLILRNSDLFAGQNVLVLNYEGDLLPKQLLESAKKVTALSLDYHHHLIMSPYAEQNLALHFGHMLPDEEQFDTVIIYYPKAKALASYLLNLAGVHLKPNGQLLVVGENKGGIRSIVKQVPDYFDSPFKQDSARHCLLYVSQLVEKAPQINLSDWVRNYQLETPQGEITICNLVGVFSEKRLDEGTKLLLSHLPKMSGRVLDFGCGAGVITAALLKAQPELKVECVDINAMAIESCKLTLAANNFTADTYPSDGLTQTKGLFNGIISNPPFHDGLRSTTDIAKNFVKDSVQKLKKGGVWHIVANRHLPYSDSISTHFKQVNVSAENNRYKVYSNKINS.

Belongs to the methyltransferase superfamily. RsmC family. In terms of assembly, monomer.

The protein localises to the cytoplasm. The catalysed reaction is guanosine(1207) in 16S rRNA + S-adenosyl-L-methionine = N(2)-methylguanosine(1207) in 16S rRNA + S-adenosyl-L-homocysteine + H(+). Functionally, specifically methylates the guanine in position 1207 of 16S rRNA in the 30S particle. In Shewanella sediminis (strain HAW-EB3), this protein is Ribosomal RNA small subunit methyltransferase C.